The chain runs to 359 residues: Peptide chain release factor 1 (359 aa).

Glutamine 235 bears the N5-methylglutamine mark. The disordered stretch occupies residues 283 to 309 (QKAESERSQARRSQVGSGDRSERIRTY).

The protein belongs to the prokaryotic/mitochondrial release factor family. Methylated by PrmC. Methylation increases the termination efficiency of RF1.

It is found in the cytoplasm. Peptide chain release factor 1 directs the termination of translation in response to the peptide chain termination codons UAG and UAA. The sequence is that of Peptide chain release factor 1 from Brucella melitensis biotype 2 (strain ATCC 23457).